Consider the following 512-residue polypeptide: Cytochrome P450 monooxygenase 208 (512 aa).

Residues Leu-4 to Tyr-24 form a helical membrane-spanning segment. Cys-438 provides a ligand contact to heme.

This sequence belongs to the cytochrome P450 family. Requires heme as cofactor.

The protein localises to the membrane. It participates in secondary metabolite biosynthesis. In terms of biological role, cytochrome P450 monooxygenase that is able to use 7-ethoxycoumarin as a substrate for oxidation. This is Cytochrome P450 monooxygenase 208 from Postia placenta (strain ATCC 44394 / Madison 698-R) (Brown rot fungus).